Consider the following 66-residue polypeptide: Large ribosomal subunit protein uL29 (66 aa).

Belongs to the universal ribosomal protein uL29 family.

This is Large ribosomal subunit protein uL29 from Brucella abortus (strain S19).